The chain runs to 275 residues: Phosphonoacetaldehyde hydrolase (275 aa).

Aspartate 15 (nucleophile) is an active-site residue. Mg(2+) contacts are provided by aspartate 15 and alanine 17. Residue lysine 56 is the Schiff-base intermediate with substrate of the active site. Aspartate 189 contacts Mg(2+).

The protein belongs to the HAD-like hydrolase superfamily. PhnX family. As to quaternary structure, homodimer. It depends on Mg(2+) as a cofactor.

It carries out the reaction phosphonoacetaldehyde + H2O = acetaldehyde + phosphate + H(+). Its function is as follows. Involved in phosphonate degradation. In Pseudomonas fluorescens (strain Pf0-1), this protein is Phosphonoacetaldehyde hydrolase.